The chain runs to 155 residues: 6,7-dimethyl-8-ribityllumazine synthase (155 aa).

5-amino-6-(D-ribitylamino)uracil contacts are provided by residues F23, 57–59 (AYE), and 81–83 (AVI). 86-87 (AT) serves as a coordination point for (2S)-2-hydroxy-3-oxobutyl phosphate. Residue H89 is the Proton donor of the active site. F114 serves as a coordination point for 5-amino-6-(D-ribitylamino)uracil. Residue R128 participates in (2S)-2-hydroxy-3-oxobutyl phosphate binding.

This sequence belongs to the DMRL synthase family.

It carries out the reaction (2S)-2-hydroxy-3-oxobutyl phosphate + 5-amino-6-(D-ribitylamino)uracil = 6,7-dimethyl-8-(1-D-ribityl)lumazine + phosphate + 2 H2O + H(+). It participates in cofactor biosynthesis; riboflavin biosynthesis; riboflavin from 2-hydroxy-3-oxobutyl phosphate and 5-amino-6-(D-ribitylamino)uracil: step 1/2. Catalyzes the formation of 6,7-dimethyl-8-ribityllumazine by condensation of 5-amino-6-(D-ribitylamino)uracil with 3,4-dihydroxy-2-butanone 4-phosphate. This is the penultimate step in the biosynthesis of riboflavin. This chain is 6,7-dimethyl-8-ribityllumazine synthase, found in Desulfotalea psychrophila (strain LSv54 / DSM 12343).